The primary structure comprises 185 residues: Elongation factor P (185 aa).

Belongs to the elongation factor P family.

The protein resides in the cytoplasm. The protein operates within protein biosynthesis; polypeptide chain elongation. In terms of biological role, involved in peptide bond synthesis. Stimulates efficient translation and peptide-bond synthesis on native or reconstituted 70S ribosomes in vitro. Probably functions indirectly by altering the affinity of the ribosome for aminoacyl-tRNA, thus increasing their reactivity as acceptors for peptidyl transferase. The protein is Elongation factor P of Bacillus mycoides (strain KBAB4) (Bacillus weihenstephanensis).